The primary structure comprises 505 residues: AAA-ATPase At5g17760 (505 aa).

A helical membrane pass occupies residues 11-27; sequence TSVFTAYASMAGYMMMI. The disordered stretch occupies residues 136 to 155; sequence GGGGGVGGRGGGGGRRGGMD. The span at 137 to 151 shows a compositional bias: gly residues; sequence GGGGVGGRGGGGGRR. 260–267 lines the ATP pocket; it reads GPPGTGKS.

Belongs to the AAA ATPase family. BCS1 subfamily. The cofactor is Mg(2+).

It is found in the membrane. The catalysed reaction is ATP + H2O = ADP + phosphate + H(+). The polypeptide is AAA-ATPase At5g17760 (Arabidopsis thaliana (Mouse-ear cress)).